The sequence spans 191 residues: Putative glutathione-dependent formaldehyde-activating enzyme (191 aa).

A CENP-V/GFA domain is found at 20–166; that stretch reads FAGGNLYCKC…FKAVGLETYD (147 aa). Zn(2+)-binding residues include cysteine 27, cysteine 29, cysteine 48, cysteine 50, cysteine 53, cysteine 95, and cysteine 98.

The protein belongs to the Gfa family. Zn(2+) serves as cofactor.

The enzyme catalyses S-(hydroxymethyl)glutathione = glutathione + formaldehyde. It participates in one-carbon metabolism; formaldehyde degradation; formate from formaldehyde (glutathione route): step 1/3. Catalyzes the condensation of formaldehyde and glutathione to S-hydroxymethylglutathione. The polypeptide is Putative glutathione-dependent formaldehyde-activating enzyme (Aspergillus terreus (strain NIH 2624 / FGSC A1156)).